The chain runs to 61 residues: Protein translocase subunit SecE (61 aa).

Residues 39 to 59 form a helical membrane-spanning segment; it reads VGIIIIGLIGFILSIVSQVLF.

This sequence belongs to the SecE/SEC61-gamma family. As to quaternary structure, component of the Sec protein translocase complex. Heterotrimer consisting of SecY (alpha), SecG (beta) and SecE (gamma) subunits. The heterotrimers can form oligomers, although 1 heterotrimer is thought to be able to translocate proteins. Interacts with the ribosome. May interact with SecDF, and other proteins may be involved.

The protein resides in the cell membrane. Essential subunit of the Sec protein translocation channel SecYEG. Clamps together the 2 halves of SecY. May contact the channel plug during translocation. The chain is Protein translocase subunit SecE from Methanosphaera stadtmanae (strain ATCC 43021 / DSM 3091 / JCM 11832 / MCB-3).